Reading from the N-terminus, the 170-residue chain is MNLTLLATEGFGLNFNLFETNILNWAVVVFGLYKFLPSFLGKMLQKRREGILLELKDAEDRLVNATKALDKAKKDLSSAEEKASQIKADSFKRSESIRMESEKKAIEEMARIKQSAISDESSEASRAISQLRKEAVELAIKKALDSLPNRLDSTTQENLVTQSINNIEVN.

Residues phenylalanine 15–proline 37 form a helical membrane-spanning segment.

Belongs to the ATPase B chain family. F-type ATPases have 2 components, F(1) - the catalytic core - and F(0) - the membrane proton channel. F(1) has five subunits: alpha(3), beta(3), gamma(1), delta(1), epsilon(1). F(0) has four main subunits: a(1), b(1), b'(1) and c(10-14). The alpha and beta chains form an alternating ring which encloses part of the gamma chain. F(1) is attached to F(0) by a central stalk formed by the gamma and epsilon chains, while a peripheral stalk is formed by the delta, b and b' chains.

The protein localises to the cellular thylakoid membrane. Its function is as follows. F(1)F(0) ATP synthase produces ATP from ADP in the presence of a proton or sodium gradient. F-type ATPases consist of two structural domains, F(1) containing the extramembraneous catalytic core and F(0) containing the membrane proton channel, linked together by a central stalk and a peripheral stalk. During catalysis, ATP synthesis in the catalytic domain of F(1) is coupled via a rotary mechanism of the central stalk subunits to proton translocation. Functionally, component of the F(0) channel, it forms part of the peripheral stalk, linking F(1) to F(0). The protein is ATP synthase subunit b of Prochlorococcus marinus (strain MIT 9312).